A 496-amino-acid chain; its full sequence is RNA-binding motif protein, Y chromosome, family 1 member F/J (496 aa).

Residues 8 to 85 (GKLFIGGLNR…KAIKVEQAKK (78 aa)) form the RRM domain. Disordered regions lie at residues 81–345 (EQAK…YAPP) and 452–496 (KDQR…SSRY). 2 stretches are compositionally biased toward low complexity: residues 97 to 114 (PASSRNRSPSGSLRSARG) and 149 to 159 (PVKRGPSSRSG). Residues 175 to 184 (NSWMGSQGPM) are compositionally biased toward polar residues. Composition is skewed to basic and acidic residues over residues 204–214 (RNDRMSTRHDG), 242–253 (DNGHSNRDEHSS), 276–289 (AYRDYGHSRRDESY), 313–326 (GYRDYGHSRRHESY), 335–345 (SSRETRDYAPP), and 484–496 (GESRSEKGDSSRY).

In terms of assembly, interacts with splicing factor proteins SFRS3/SRP20, TRA2B/SFRS10, KHDRBS1/SAM68 and KHDRBS3. As to expression, testis-specific.

The protein localises to the nucleus. In terms of biological role, RNA-binding protein which may be involved in spermatogenesis. Required for sperm development, possibly by participating in pre-mRNA splicing in the testis. This chain is RNA-binding motif protein, Y chromosome, family 1 member F/J (RBMY1F), found in Homo sapiens (Human).